The primary structure comprises 328 residues: Malate dehydrogenase (328 aa).

11–17 is an NAD(+) binding site; the sequence is GAAGQIG. Substrate is bound by residues Arg-94 and Arg-100. Residues Asn-107, Gln-114, and 131–133 contribute to the NAD(+) site; that span reads VGN. 2 residues coordinate substrate: Asn-133 and Arg-164. The active-site Proton acceptor is His-189.

It belongs to the LDH/MDH superfamily. MDH type 2 family.

It carries out the reaction (S)-malate + NAD(+) = oxaloacetate + NADH + H(+). Functionally, catalyzes the reversible oxidation of malate to oxaloacetate. In Xanthomonas axonopodis pv. citri (strain 306), this protein is Malate dehydrogenase.